A 239-amino-acid polypeptide reads, in one-letter code: Lactate utilization protein A 2 (239 aa).

This sequence belongs to the LutA/YkgE family.

Functionally, is involved in L-lactate degradation and allows cells to grow with lactate as the sole carbon source. This Bacillus mycoides (strain KBAB4) (Bacillus weihenstephanensis) protein is Lactate utilization protein A 2.